The sequence spans 424 residues: Imidazolonepropionase (424 aa).

Positions 84 and 86 each coordinate Fe(3+). Positions 84 and 86 each coordinate Zn(2+). Positions 93, 156, and 189 each coordinate 4-imidazolone-5-propanoate. Tyrosine 156 is an N-formimidoyl-L-glutamate binding site. Histidine 254 contributes to the Fe(3+) binding site. Position 254 (histidine 254) interacts with Zn(2+). Glutamate 257 contacts 4-imidazolone-5-propanoate. Fe(3+) is bound at residue aspartate 328. Aspartate 328 is a Zn(2+) binding site. N-formimidoyl-L-glutamate-binding residues include asparagine 330 and glycine 332. Serine 333 contributes to the 4-imidazolone-5-propanoate binding site.

It belongs to the metallo-dependent hydrolases superfamily. HutI family. The cofactor is Zn(2+). It depends on Fe(3+) as a cofactor.

The protein resides in the cytoplasm. It carries out the reaction 4-imidazolone-5-propanoate + H2O = N-formimidoyl-L-glutamate. It functions in the pathway amino-acid degradation; L-histidine degradation into L-glutamate; N-formimidoyl-L-glutamate from L-histidine: step 3/3. Catalyzes the hydrolytic cleavage of the carbon-nitrogen bond in imidazolone-5-propanoate to yield N-formimidoyl-L-glutamate. It is the third step in the universal histidine degradation pathway. The protein is Imidazolonepropionase of Geobacillus kaustophilus (strain HTA426).